Reading from the N-terminus, the 954-residue chain is Zinc finger protein 618 (954 aa).

Met1 carries the post-translational modification N-acetylmethionine. Low complexity predominate over residues 1 to 19 (MNQPGGAAAPQADGASAAG). Residues 1–56 (MNQPGGAAAPQADGASAAGRKSTASRERLKRSQKSTKVEGPEPVPAEASLSAEQGT) form a disordered region. Residues Lys63 and Lys81 each participate in a glycyl lysine isopeptide (Lys-Gly) (interchain with G-Cter in SUMO2) cross-link. 2 consecutive C2H2-type zinc fingers follow at residues 147–169 (YECGICGKKYKYYNCFQTHVRAH) and 188–210 (YTCDICGKKYKYYSCFQEHRDLH). Lys239 is covalently cross-linked (Glycyl lysine isopeptide (Lys-Gly) (interchain with G-Cter in SUMO2)). A C2H2-type 3 zinc finger spans residues 256–278 (YTCEFCGKQYKYYTPYQEHVALH). 2 disordered regions span residues 282–307 (STAPGWEPPDDPDTGSECSHPEVSPS) and 337–390 (RTPP…NSSE). The span at 340 to 357 (PATQTQTFRTPNSGSPAS) shows a compositional bias: polar residues. A compositionally biased stretch (basic and acidic residues) spans 366 to 380 (FSRRVEGKAQNHFEE). A C2H2-type 4 zinc finger spans residues 392–414 (YTCGACGIQFQFYNNLLEHMQSH). Positions 421-463 (NIASNQSRSPPAVVEEKWKPQAQRNSANNTTTSGLTPNSMIPE) are disordered. A Glycyl lysine isopeptide (Lys-Gly) (interchain with G-Cter in SUMO2) cross-link involves residue Lys437. The span at 442–459 (AQRNSANNTTTSGLTPNS) shows a compositional bias: polar residues.

It belongs to the krueppel C2H2-type zinc-finger protein family. Interacts with UHRF2.

It localises to the nucleus. The protein resides in the chromosome. Functionally, regulates UHRF2 function as a specific 5-hydroxymethylcytosine (5hmC) reader by regulating its chromatin localization. The protein is Zinc finger protein 618 (ZNF618) of Homo sapiens (Human).